Consider the following 135-residue polypeptide: Transcriptional activator protein (135 aa).

Positions 17–32 (KVQHRAAKRKRIRRKR) match the Nuclear localization signal motif. The segment at 37–54 (CGCSYYVHINCHNHGFTH) is a zinc-finger region. Positions 77–115 (LFQDHSTRQQTVRNEPGHNNRPDTVQPQPEESVGTTSML) are disordered. A compositionally biased stretch (polar residues) spans 98–114 (PDTVQPQPEESVGTTSM). Residues 120-135 (GLDDLTASDLAFLEGI) are transactivation.

It belongs to the geminiviridae transcriptional activator protein family. In terms of assembly, monomer. Homodimer. Homooligomer. Self-interaction correlates with nuclear localization and efficient activation of transcription. Monomers suppress local silencing by interacting with and inactivating host adenosine kinase 2 (ADK2) in the cytoplasm. Interacts with and inhibits host SNF1 kinase. Binds to ssDNA. Post-translationally, phosphorylated.

The protein localises to the host nucleus. It is found in the host cytoplasm. In terms of biological role, strong activator of the late viral genes promoters. Enhances the expression of the capsid protein and nuclear shuttle protein. Acts as a suppressor of RNA-mediated gene silencing, also known as post-transcriptional gene silencing (PTGS), a mechanism of plant viral defense that limits the accumulation of viral RNAs. Suppresses the host RNA silencing by inhibiting adenosine kinase 2 (ADK2), a kinase involved in a general methylation pathway. Also suppresses the host basal defense by interacting with and inhibiting SNF1 kinase, a key regulator of cell metabolism implicated in innate antiviral defense. Determines pathogenicity. This Indian cassava mosaic virus (ICMV) protein is Transcriptional activator protein.